Reading from the N-terminus, the 315-residue chain is tRNA dimethylallyltransferase (315 aa).

Residue 14-21 (GPTASGKT) coordinates ATP. 16 to 21 (TASGKT) contributes to the substrate binding site. Interaction with substrate tRNA stretches follow at residues 39–42 (DSAL), 163–167 (QRIQR), and 248–253 (RCVGYR).

Belongs to the IPP transferase family. In terms of assembly, monomer. Requires Mg(2+) as cofactor.

The enzyme catalyses adenosine(37) in tRNA + dimethylallyl diphosphate = N(6)-dimethylallyladenosine(37) in tRNA + diphosphate. Functionally, catalyzes the transfer of a dimethylallyl group onto the adenine at position 37 in tRNAs that read codons beginning with uridine, leading to the formation of N6-(dimethylallyl)adenosine (i(6)A). The sequence is that of tRNA dimethylallyltransferase from Paraburkholderia xenovorans (strain LB400).